The sequence spans 163 residues: Epithelial membrane protein 3 (163 aa).

A helical membrane pass occupies residues 4–24 (LLLVVSALHILILVLLFVATL). N-linked (GlcNAc...) asparagine glycans are attached at residues Asn46 and Asn56. A run of 3 helical transmembrane segments spans residues 66 to 86 (VQALMVLSLILCCLSFILFMF), 100 to 120 (TGLCQLCTSAAVFSGALIYAI), and 139 to 159 (FALAWVAFPLALVSGTVYIHL).

It belongs to the PMP-22/EMP/MP20 family.

The protein resides in the membrane. Its function is as follows. Probably involved in cell proliferation and cell-cell interactions. The polypeptide is Epithelial membrane protein 3 (Emp3) (Mus musculus (Mouse)).